A 274-amino-acid chain; its full sequence is MNKTAIALLALLASSASLAATPWQKITQPVPGSAQSIGSFSNGCIVGADTLPIQSEHYQVMRTDQRRYFGHPDLVMFIQRLSSQVSNLGMGTVLIGDMGMPAGGRFNGGHASHQTGLDVDIFLQLPKTRWTSAQLLRPQALDLVSRDGKHVVSTLWKPEIFSLIKLAAQDKDVTRIFVNPAIKQQLCLDAGTDRDWLRKVRPWFQHRAHMHVRLRCPADSLECEDQPLPPSGDGCGAELQSWFEPPKPGTTKPEKKTPPPLPPSCQALLDEHVI.

A signal peptide spans 1–19 (MNKTAIALLALLASSASLA). Intrachain disulfides connect Cys44/Cys265, Cys187/Cys235, and Cys216/Cys223. Zn(2+) is bound by residues His110, His113, Asp120, Asp147, His150, and His211. The interval 228-274 (LPPSGDGCGAELQSWFEPPKPGTTKPEKKTPPPLPPSCQALLDEHVI) is disordered.

The protein belongs to the peptidase M74 family. As to quaternary structure, dimer. Requires Zn(2+) as cofactor.

The protein localises to the periplasm. With respect to regulation, inhibited by Zn(2+) at 10 mM and by metal chelating agents EDTA and 1,10-phenanthroline. Murein endopeptidase that cleaves the D-alanyl-meso-2,6-diamino-pimelyl amide bond that connects peptidoglycan strands. Likely plays a role in the removal of murein from the sacculus and could also play a role in the integration of nascent murein strands into the sacculus. This Escherichia coli (strain K12) protein is Penicillin-insensitive murein endopeptidase (mepA).